Consider the following 166-residue polypeptide: Ribosome maturation factor RimP (166 aa).

The protein belongs to the RimP family.

It is found in the cytoplasm. Functionally, required for maturation of 30S ribosomal subunits. The sequence is that of Ribosome maturation factor RimP from Paramagnetospirillum magneticum (strain ATCC 700264 / AMB-1) (Magnetospirillum magneticum).